Here is a 647-residue protein sequence, read N- to C-terminus: Homologous recombination OB-fold protein (647 aa).

Position 47 is a phosphoserine (serine 47). Disordered regions lie at residues 284-361 (ARGT…GPQG), 380-399 (SRTP…RRFP), and 581-631 (SFLK…DDLD). An asymmetric dimethylarginine mark is found at arginine 285, arginine 295, arginine 329, and arginine 337. Over residues 287 to 308 (TIQSSPQNRFPCQPFQSPSSWL) the composition is skewed to polar residues. Low complexity predominate over residues 319–332 (TPNSSCSTPSRTSS). Residues 380–390 (SRTPQQPTHPS) show a composition bias toward polar residues. The segment covering 618–631 (ASPEEELPEADDLD) has biased composition (acidic residues).

As to quaternary structure, interacts with MCM8; this interaction is necessary for MCM8-MCM9 helicase complex recruitment to DNA damage sites. Interacts with RPA1; this interaction associates HROB with the RPA complex.

It localises to the nucleus. Its subcellular location is the chromosome. Its function is as follows. DNA-binding protein involved in homologous recombination that acts by recruiting the MCM8-MCM9 helicase complex to sites of DNA damage to promote DNA repair synthesis. The protein is Homologous recombination OB-fold protein of Homo sapiens (Human).